A 184-amino-acid chain; its full sequence is UPF0398 protein BALH_1408 (184 aa).

Belongs to the UPF0398 family.

The protein is UPF0398 protein BALH_1408 of Bacillus thuringiensis (strain Al Hakam).